A 1188-amino-acid polypeptide reads, in one-letter code: Major DNA-binding protein (1188 aa).

A Required for filament formation motif is present at residues 838-839 (FW). Positions 1145–1175 (CDDDDADKDAPHGAKSDVPNGDDEDVFAGPS) are disordered. The required for nuclear localization stretch occupies residues 1166–1188 (DDEDVFAGPSAKKRTLATEILFC).

The protein belongs to the herpesviridae major DNA-binding protein family. Homooligomers. Forms double-helical filaments necessary for the formation of replication compartments within the host nucleus. Interacts with the origin-binding protein. Interacts with the helicase primase complex; this interaction stimulates primer synthesis activity of the helicase-primase complex. Interacts with the DNA polymerase. Interacts with the alkaline exonuclease; this interaction increases its nuclease processivity.

It localises to the host nucleus. In terms of biological role, plays several crucial roles in viral infection. Participates in the opening of the viral DNA origin to initiate replication by interacting with the origin-binding protein. May disrupt loops, hairpins and other secondary structures present on ssDNA to reduce and eliminate pausing of viral DNA polymerase at specific sites during elongation. Promotes viral DNA recombination by performing strand-transfer, characterized by the ability to transfer a DNA strand from a linear duplex to a complementary single-stranded DNA circle. Can also catalyze the renaturation of complementary single strands. Additionally, reorganizes the host cell nucleus, leading to the formation of prereplicative sites and replication compartments. This process is driven by the protein which can form double-helical filaments in the absence of DNA. This chain is Major DNA-binding protein, found in Amazona oratrix (yellow-headed parrot).